The following is a 77-amino-acid chain: U10-lycotoxin-Ls1d (77 aa).

The signal sequence occupies residues 1–20 (MKLIIFTGLFLFAIVSLIEA). Residues 21 to 26 (EEESGR) constitute a propeptide that is removed on maturation.

It belongs to the neurotoxin 19 (CSTX) family. 09 (U10-Lctx) subfamily. Contains 4 disulfide bonds. Expressed by the venom gland.

The protein localises to the secreted. The polypeptide is U10-lycotoxin-Ls1d (Lycosa singoriensis (Wolf spider)).